The chain runs to 250 residues: MNARLTGLGLNLLSFAVGIGGWYLLTATGAVVLPGPVDVLERAVTLLLNGQLVGDIFASLRRVLSGFVLGVALAIPVGFLMGWYRIARSLIEPWVQFFRMIPPLAVIPLAIVTLGIDESPKIFVIFLASFLSSVVATYQGVISVDRTLINAARVLGAKDATIFARVIVPASVPFILVGVRIGLGSAWATVVAAELIAAQSGLGYRMQQAQLYYDLPTIFVSLVTIGILGLFMDRLLQAADRRLTQWQERA.

Helical transmembrane passes span 12–32, 63–83, 94–114, 122–142, 172–192, and 211–231; these read LLSF…GAVV, VLSG…LMGW, WVQF…IVTL, IFVI…QGVI, VPFI…TVVA, and LYYD…LGLF. The 181-residue stretch at 56–236 folds into the ABC transmembrane type-1 domain; sequence IFASLRRVLS…ILGLFMDRLL (181 aa).

The protein belongs to the binding-protein-dependent transport system permease family. In terms of assembly, the complex is composed of two ATP-binding proteins (BAB2_1147), two transmembrane proteins (BAB2_1148) and a solute-binding protein (BAB2_1146).

The protein localises to the cell inner membrane. Its function is as follows. Probably part of an ABC transporter complex. Probably responsible for the translocation of the substrate across the membrane. The polypeptide is Probable ABC transporter permease protein BAB2_1148 (Brucella abortus (strain 2308)).